A 383-amino-acid chain; its full sequence is DNA dC-&gt;dU-editing enzyme APOBEC-3G (383 aa).

Positions 1–60 (MKPQFRNTVERMYRDTFFYNFNNRPILSRRNTVWLCYEVKTRGPSMPTWDAKIFRGQVYS) are essential for cytoplasmic localization. 2 consecutive CMP/dCMP-type deaminase domains span residues 29 to 138 (RRNT…LRVL) and 214 to 327 (GQHE…LRTL). At Thr32 the chain carries Phosphothreonine; by PKA. His65, Cys97, and Cys100 together coordinate Zn(2+). The necessary for homooligomerization stretch occupies residues 209 to 335 (KPWVSGQHET…TLHRDGAKIA (127 aa)). Residues 213–215 (SGQ) are interaction with DNA. Thr218 carries the post-translational modification Phosphothreonine; by PKA and CAMK2. A Zn(2+)-binding site is contributed by His257. Glu259 (proton donor) is an active-site residue. Zn(2+)-binding residues include Cys287 and Cys290. An interaction with DNA region spans residues 312–319 (RIYDDQGR).

The protein belongs to the cytidine and deoxycytidylate deaminase family. Homodimer. Zn(2+) serves as cofactor.

The protein resides in the cytoplasm. Its subcellular location is the nucleus. It is found in the P-body. The catalysed reaction is a 2'-deoxycytidine in single-stranded DNA + H2O + H(+) = a 2'-deoxyuridine in single-stranded DNA + NH4(+). In terms of biological role, DNA deaminase (cytidine deaminase) which acts as an inhibitor of retrovirus replication and retrotransposon mobility. After the penetration of retroviral nucleocapsids into target cells of infection and the initiation of reverse transcription, it can induce the conversion of cytosine to uracil in the minus-sense single-strand viral DNA, leading to G-to-A hypermutations in the subsequent plus-strand viral DNA. The resultant detrimental levels of mutations in the proviral genome, along with a deamination-independent mechanism that works prior to the proviral integration, together exert efficient antiretroviral effects in infected target cells. Selectively targets single-stranded DNA and does not deaminate double-stranded DNA or single- or double-stranded RNA. This is DNA dC-&gt;dU-editing enzyme APOBEC-3G (APOBEC3G) from Papio anubis (Olive baboon).